Reading from the N-terminus, the 616-residue chain is Chaperone protein HtpG (616 aa).

An a; substrate-binding region spans residues 1 to 334; sequence MTIKQTHSFQ…TADLSLNLSR (334 aa). A b region spans residues 335–549; it reads EILQDNKVIK…ENEMGGNMER (215 aa). The c stretch occupies residues 550–616; that stretch reads IMKSLGQDIP…FVKRINKLIN (67 aa).

The protein belongs to the heat shock protein 90 family. In terms of assembly, homodimer.

It localises to the cytoplasm. Its function is as follows. Molecular chaperone. Has ATPase activity. In Vesicomyosocius okutanii subsp. Calyptogena okutanii (strain HA), this protein is Chaperone protein HtpG.